Consider the following 397-residue polypeptide: F-box protein At5g25290 (397 aa).

Residues 11-56 (VTLWSEIPMDILRSVFERLSFVDLHRAKIVCSHWYSCSKQSFLRKT) form the F-box domain.

This Arabidopsis thaliana (Mouse-ear cress) protein is F-box protein At5g25290.